Reading from the N-terminus, the 509-residue chain is uncharacterized protein (509 aa).

The 123-residue stretch at 358–480 (RRIVIIDAIS…IIPFIVENGE (123 aa)) folds into the RNase NYN domain.

This is an uncharacterized protein from Methanocaldococcus jannaschii (strain ATCC 43067 / DSM 2661 / JAL-1 / JCM 10045 / NBRC 100440) (Methanococcus jannaschii).